Consider the following 516-residue polypeptide: Alstonine synthase (516 aa).

A helical membrane pass occupies residues 6-26; it reads NFSLTSPIFLLLSSLFLIILL. Cys-453 contributes to the heme binding site.

Belongs to the cytochrome P450 family. Heme is required as a cofactor. Highly expressed in stems. Expressed at low levels in roots.

Its subcellular location is the endoplasmic reticulum membrane. It carries out the reaction tetrahydroalstonine + A + reduced [NADPH--hemoprotein reductase] + O2 = alstonine + AH2 + oxidized [NADPH--hemoprotein reductase] + 2 H2O + H(+). The enzyme catalyses ajmalicine + A + reduced [NADPH--hemoprotein reductase] + O2 = serpentine + AH2 + oxidized [NADPH--hemoprotein reductase] + 2 H2O + H(+). It functions in the pathway alkaloid biosynthesis. Its function is as follows. Involved in monoterpene indole alkaloids (MIAs) biosynthesis. Converts by aromatization the tetrahydro-beta-carboline alkaloids tetrahydroalstonine and ajmalicine to the corresponding beta-carboline alkaloids alstonine and serpentine, respectively. The sequence is that of Alstonine synthase from Catharanthus roseus (Madagascar periwinkle).